The primary structure comprises 301 residues: Probable aspartoacylase (301 aa).

Zn(2+) is bound by residues His-13 and Glu-16. Residues Arg-54 and 61–62 (NR) contribute to the substrate site. His-105 contributes to the Zn(2+) binding site. Residues Glu-163 and Tyr-273 each contribute to the substrate site.

The protein belongs to the AspA/AstE family. Aspartoacylase subfamily. The cofactor is Zn(2+).

The catalysed reaction is an N-acyl-L-aspartate + H2O = a carboxylate + L-aspartate. This is Probable aspartoacylase from Prochlorococcus marinus (strain MIT 9312).